The following is a 218-amino-acid chain: Ras-related protein Rab-27B (218 aa).

The residue at position 2 (Thr-2) is an N-acetylthreonine. 16 to 24 contributes to the GTP binding site; it reads GDSGVGKTT. The short motif at 38–46 is the Effector region element; it reads FITTVGIDF. Residues 74–78, 133–136, and 163–165 contribute to the GTP site; these read DTAGQ, NKAD, and SAA. Cys-123 and Cys-188 form a disulfide bridge. The tract at residues 194-218 is disordered; sequence IPDTVNGGNSGNLDGEKPPEKKCIC. Over residues 207–218 the composition is skewed to basic and acidic residues; that stretch reads DGEKPPEKKCIC. 2 S-geranylgeranyl cysteine lipidation sites follow: Cys-216 and Cys-218. Cys-218 is modified (cysteine methyl ester).

This sequence belongs to the small GTPase superfamily. Rab family. As to quaternary structure, interacts with SYTL2, SYTL4, MYRIP and MLPH. Interacts with RPH3A and RPH3A. Interacts (GDP-bound form preferentially) with DENND10. In terms of tissue distribution, expressed primarily in testis.

The protein localises to the membrane. The protein resides in the late endosome. It catalyses the reaction GTP + H2O = GDP + phosphate + H(+). Regulated by guanine nucleotide exchange factors (GEFs) which promote the exchange of bound GDP for free GTP, GTPase activating proteins (GAPs) which increase the GTP hydrolysis activity, and GDP dissociation inhibitors which inhibit the dissociation of the nucleotide from the GTPase. Activated by GEFs such as DENND10. Its function is as follows. Small GTPase which cycles between active GTP-bound and inactive GDP-bound states. In its active state, binds to a variety of effector proteins to regulate homeostasis of late endocytic pathway, including endosomal positioning, maturation and secretion. Plays a role in NTRK2/TRKB axonal anterograde transport by facilitating the association of NTRK2/TRKB with KLC1. May be involved in targeting uroplakins to urothelial apical membranes. The polypeptide is Ras-related protein Rab-27B (RAB27B) (Homo sapiens (Human)).